The chain runs to 105 residues: Large ribosomal subunit protein bL21 (105 aa).

The protein belongs to the bacterial ribosomal protein bL21 family. Part of the 50S ribosomal subunit. Contacts protein L20.

This protein binds to 23S rRNA in the presence of protein L20. The chain is Large ribosomal subunit protein bL21 from Dictyoglomus turgidum (strain DSM 6724 / Z-1310).